A 332-amino-acid polypeptide reads, in one-letter code: tRNA-dihydrouridine synthase B (332 aa).

FMN is bound by residues 16–18 and Gln70; that span reads PMA. The Proton donor role is filled by Cys100. FMN is bound by residues Lys139, 200-202, and 224-225; these read NGD and GR.

This sequence belongs to the Dus family. DusB subfamily. Requires FMN as cofactor.

The enzyme catalyses a 5,6-dihydrouridine in tRNA + NAD(+) = a uridine in tRNA + NADH + H(+). It catalyses the reaction a 5,6-dihydrouridine in tRNA + NADP(+) = a uridine in tRNA + NADPH + H(+). Functionally, catalyzes the synthesis of 5,6-dihydrouridine (D), a modified base found in the D-loop of most tRNAs, via the reduction of the C5-C6 double bond in target uridines. This is tRNA-dihydrouridine synthase B from Pasteurella multocida (strain Pm70).